A 216-amino-acid polypeptide reads, in one-letter code: Acyl-homoserine-lactone synthase (216 aa).

This sequence belongs to the autoinducer synthase family.

It catalyses the reaction a fatty acyl-[ACP] + S-adenosyl-L-methionine = an N-acyl-L-homoserine lactone + S-methyl-5'-thioadenosine + holo-[ACP] + H(+). In terms of biological role, required for the synthesis of OHHL (N-(3-oxohexanoyl)-L-homoserine lactone), an autoinducer molecule which binds to a yet uncharacterized transcriptional regulator. The chain is Acyl-homoserine-lactone synthase (eagI) from Enterobacter agglomerans (Erwinia herbicola).